The following is a 333-amino-acid chain: Porphobilinogen deaminase (333 aa).

S-(dipyrrolylmethanemethyl)cysteine is present on cysteine 255.

The protein belongs to the HMBS family. As to quaternary structure, monomer. Dipyrromethane is required as a cofactor.

It carries out the reaction 4 porphobilinogen + H2O = hydroxymethylbilane + 4 NH4(+). Its pathway is porphyrin-containing compound metabolism; protoporphyrin-IX biosynthesis; coproporphyrinogen-III from 5-aminolevulinate: step 2/4. In terms of biological role, tetrapolymerization of the monopyrrole PBG into the hydroxymethylbilane pre-uroporphyrinogen in several discrete steps. This chain is Porphobilinogen deaminase, found in Burkholderia vietnamiensis (strain G4 / LMG 22486) (Burkholderia cepacia (strain R1808)).